The primary structure comprises 107 residues: Proteinase inhibitor I-B (107 aa).

A signal peptide spans 1–22 (MVKFAHVVAFLLLASLFQPLTA). A propeptide spanning residues 23–39 (RDLEINVLQLDVSQSGC) is cleaved from the precursor.

The protein belongs to the protease inhibitor I13 (potato type I serine protease inhibitor) family.

It is found in the secreted. This Nicotiana tabacum (Common tobacco) protein is Proteinase inhibitor I-B (TIMPA).